The following is a 176-amino-acid chain: RNA pyrophosphohydrolase (176 aa).

The 144-residue stretch at 6–149 (GYRPNVGIIL…KRQVYQQALF (144 aa)) folds into the Nudix hydrolase domain. The Nudix box motif lies at 38–59 (GGIKHGESPEQAMFRELFEEVG).

It belongs to the Nudix hydrolase family. RppH subfamily. A divalent metal cation is required as a cofactor.

Functionally, accelerates the degradation of transcripts by removing pyrophosphate from the 5'-end of triphosphorylated RNA, leading to a more labile monophosphorylated state that can stimulate subsequent ribonuclease cleavage. The chain is RNA pyrophosphohydrolase from Aromatoleum aromaticum (strain DSM 19018 / LMG 30748 / EbN1) (Azoarcus sp. (strain EbN1)).